A 149-amino-acid polypeptide reads, in one-letter code: Transcriptional repressor NrdR (149 aa).

Residues 3 to 34 (CPYCSYEESKVVDSRSAEDYNAIRRRRECLRC) fold into a zinc finger. In terms of domain architecture, ATP-cone spans 49 to 139 (ILVIKKDLSR…VYRQFKDINT (91 aa)).

Belongs to the NrdR family. Zn(2+) serves as cofactor.

Negatively regulates transcription of bacterial ribonucleotide reductase nrd genes and operons by binding to NrdR-boxes. The chain is Transcriptional repressor NrdR from Clostridium perfringens (strain ATCC 13124 / DSM 756 / JCM 1290 / NCIMB 6125 / NCTC 8237 / Type A).